The sequence spans 985 residues: SWI/SNF complex subunit SWI3D (985 aa).

Positions 1–55 (MEEKRRDSAGTLAFAGSSGDSPASEPMPAPRRRGGGLKRKANALGGSNFFSSAPS) are disordered. Basic residues predominate over residues 30 to 41 (PRRRGGGLKRKA). A coiled-coil region spans residues 108–133 (EKPKEEEERNKAIREWEALEAKIEAD). One can recognise an SWIRM domain in the interval 145-242 (HVVPNHCGWF…FHPFPPTDTG (98 aa)). The segment at 305–359 (AVEYHCNSCSADCSRKRYHCPKQADFDLCTECFNSGKFSSDMSSSDFILMEPAEA) adopts a ZZ-type; degenerate zinc-finger fold. Residues Cys310, Cys313, Cys333, and Cys336 each contribute to the Zn(2+) site. Residues 362–413 (VGSGKWTDQETLLLLEALEIFKENWNEIAEHVATKTKAQCMLHFLQMPIEDA) form the SANT domain. Composition is skewed to basic and acidic residues over residues 428 to 464 (TTDL…KEVP), 493 to 502 (AEQKTPKLET), and 615 to 661 (DNSH…EKQP). 2 disordered regions span residues 428–502 (TTDL…KLET) and 591–814 (EDPP…EGKK). Positions 662 to 671 (GSRTENSTTK) are enriched in polar residues. Positions 703 to 724 (CSGKELQEPLKDGNKLSSENKD) are enriched in basic and acidic residues. Over residues 725–736 (ASQSTVSQSAAD) the composition is skewed to polar residues. Residues 742–776 (ASRDVEMKDTLQSEKDPEDVVKTVGEKVQLAKEEG) are compositionally biased toward basic and acidic residues. The segment covering 780–800 (VLSTPDKSVSQQPIGSASAPE) has biased composition (polar residues). A coiled-coil region spans residues 839–900 (ISAAAVKAKN…EQLERSRQRL (62 aa)). A disordered region spans residues 944–985 (MAFPRPPMPRPPGFPVPGSFVAATTMTGSSDPSPGSDNVSSV). A compositionally biased stretch (pro residues) spans 947–958 (PRPPMPRPPGFP). Positions 965-985 (AATTMTGSSDPSPGSDNVSSV) are enriched in polar residues.

As to quaternary structure, interacts with SWI3B, but not with BSH. Component of a RNA-directed DNA methylation (RdDM) complex that contains at least MORC6, MORC1/CRT1, MORC2, SWI3D and SUVH9. Interacts with MORC6 and SUVH9. Ubiquitously expressed.

It localises to the nucleus. Functionally, component of a multiprotein complex equivalent of the SWI/SNF complex, an ATP-dependent chromatin-remodeling complex, which is required for the positive and negative regulation of gene expression of a large number of genes. It changes chromatin structure by altering DNA-histone contacts within a nucleosome, leading eventually to a change in nucleosome position, thus facilitating or repressing binding of gene-specific transcription factors. The chain is SWI/SNF complex subunit SWI3D (SWI3D) from Arabidopsis thaliana (Mouse-ear cress).